Here is a 227-residue protein sequence, read N- to C-terminus: Cytochrome c oxidase subunit 2 (227 aa).

Over 1 to 14 (MAYPMQLGLQDATS) the chain is Mitochondrial intermembrane. A helical transmembrane segment spans residues 15-45 (PIMEELLHFHDHTLMIVFLISSLVLYIISLM). Residues 46-59 (LTTKLTHTSTMDAQ) lie on the Mitochondrial matrix side of the membrane. The helical transmembrane segment at 60–87 (EVETIWTILPAIILIMIALPSLRILYMM) threads the bilayer. The Mitochondrial intermembrane portion of the chain corresponds to 88 to 227 (DEINNPSLTV…HFEKWSASML (140 aa)). Residues histidine 161, cysteine 196, glutamate 198, cysteine 200, histidine 204, and methionine 207 each contribute to the Cu cation site. Glutamate 198 is a Mg(2+) binding site.

Belongs to the cytochrome c oxidase subunit 2 family. In terms of assembly, component of the cytochrome c oxidase (complex IV, CIV), a multisubunit enzyme composed of 14 subunits. The complex is composed of a catalytic core of 3 subunits MT-CO1, MT-CO2 and MT-CO3, encoded in the mitochondrial DNA, and 11 supernumerary subunits COX4I, COX5A, COX5B, COX6A, COX6B, COX6C, COX7A, COX7B, COX7C, COX8 and NDUFA4, which are encoded in the nuclear genome. The complex exists as a monomer or a dimer and forms supercomplexes (SCs) in the inner mitochondrial membrane with NADH-ubiquinone oxidoreductase (complex I, CI) and ubiquinol-cytochrome c oxidoreductase (cytochrome b-c1 complex, complex III, CIII), resulting in different assemblies (supercomplex SCI(1)III(2)IV(1) and megacomplex MCI(2)III(2)IV(2)). Found in a complex with TMEM177, COA6, COX18, COX20, SCO1 and SCO2. Interacts with TMEM177 in a COX20-dependent manner. Interacts with COX20. Interacts with COX16. The cofactor is Cu cation.

Its subcellular location is the mitochondrion inner membrane. The catalysed reaction is 4 Fe(II)-[cytochrome c] + O2 + 8 H(+)(in) = 4 Fe(III)-[cytochrome c] + 2 H2O + 4 H(+)(out). In terms of biological role, component of the cytochrome c oxidase, the last enzyme in the mitochondrial electron transport chain which drives oxidative phosphorylation. The respiratory chain contains 3 multisubunit complexes succinate dehydrogenase (complex II, CII), ubiquinol-cytochrome c oxidoreductase (cytochrome b-c1 complex, complex III, CIII) and cytochrome c oxidase (complex IV, CIV), that cooperate to transfer electrons derived from NADH and succinate to molecular oxygen, creating an electrochemical gradient over the inner membrane that drives transmembrane transport and the ATP synthase. Cytochrome c oxidase is the component of the respiratory chain that catalyzes the reduction of oxygen to water. Electrons originating from reduced cytochrome c in the intermembrane space (IMS) are transferred via the dinuclear copper A center (CU(A)) of subunit 2 and heme A of subunit 1 to the active site in subunit 1, a binuclear center (BNC) formed by heme A3 and copper B (CU(B)). The BNC reduces molecular oxygen to 2 water molecules using 4 electrons from cytochrome c in the IMS and 4 protons from the mitochondrial matrix. In Damaliscus pygargus phillipsi (Blesbok), this protein is Cytochrome c oxidase subunit 2 (MT-CO2).